The sequence spans 315 residues: MPDIKLFAGNATPELAKRISERLYISLGDATVARFSDGEIQVQINENVRGADVFIIQSTCAPTNDNLMELVVMVDALRRASAGRITAVIPYFGYARQDRRVRSARVPITAKVVADLLSIVGIDRVLTCDLHAEQIQGFFDVPVDNVFGSPVLIHDILKKSDLKNPIVVSPDIGGVVRARAVAKLLNDTDMAIIDKRRPRANVAQVMHIIGDVADRDCILVDDMIDTGGTLCKAAEALKERGAKRVFAYATHAVFSGAAAKNLASDAIDEVVVTDTIPLSEEMKAIGKVRVLTLSSMLAEAIRRISNEESISAMFN.

ATP is bound by residues 37 to 39 (DGE) and 96 to 97 (RQ). H131 and D171 together coordinate Mg(2+). Residue K195 is part of the active site. D-ribose 5-phosphate is bound by residues R197, D221, and 225–229 (DTGGT).

The protein belongs to the ribose-phosphate pyrophosphokinase family. Class I subfamily. Homohexamer. Requires Mg(2+) as cofactor.

The protein localises to the cytoplasm. It catalyses the reaction D-ribose 5-phosphate + ATP = 5-phospho-alpha-D-ribose 1-diphosphate + AMP + H(+). It functions in the pathway metabolic intermediate biosynthesis; 5-phospho-alpha-D-ribose 1-diphosphate biosynthesis; 5-phospho-alpha-D-ribose 1-diphosphate from D-ribose 5-phosphate (route I): step 1/1. Its function is as follows. Involved in the biosynthesis of the central metabolite phospho-alpha-D-ribosyl-1-pyrophosphate (PRPP) via the transfer of pyrophosphoryl group from ATP to 1-hydroxyl of ribose-5-phosphate (Rib-5-P). In Haemophilus influenzae (strain ATCC 51907 / DSM 11121 / KW20 / Rd), this protein is Ribose-phosphate pyrophosphokinase.